The chain runs to 256 residues: 7-cyano-7-deazaguanine synthase (256 aa).

The disordered stretch occupies residues M1–S22. Polar residues predominate over residues A8–S22. L30–L40 serves as a coordination point for ATP. Zn(2+) is bound by residues C220, C230, C233, and C236.

Belongs to the QueC family. Zn(2+) serves as cofactor.

It catalyses the reaction 7-carboxy-7-deazaguanine + NH4(+) + ATP = 7-cyano-7-deazaguanine + ADP + phosphate + H2O + H(+). It functions in the pathway purine metabolism; 7-cyano-7-deazaguanine biosynthesis. Catalyzes the ATP-dependent conversion of 7-carboxy-7-deazaguanine (CDG) to 7-cyano-7-deazaguanine (preQ(0)). This is 7-cyano-7-deazaguanine synthase from Psychrobacter sp. (strain PRwf-1).